Here is a 373-residue protein sequence, read N- to C-terminus: Zn(2)-C6 fungal-type transcription factor afumD (373 aa).

A disordered region spans residues 1 to 48; it reads MLDRSKMTSAIPDSNSSSSPRGHNQSERDSYNRKKRKGPRLAHRKSRT. Residues 33–48 show a composition bias toward basic residues; sequence RKKRKGPRLAHRKSRT. The segment at residues 50–77 is a DNA-binding region (zn(2)-C6 fungal-type); sequence CQRCRARRVKCDESRPVCRDCHRHGIPC. The tract at residues 86-110 is disordered; sequence GAIPPSTGIQSRPLEPSPSDPSNDA.

Its subcellular location is the nucleus. Zn(2)-C6 fungal-type transcription factor; part of the gene cluster that mediates the biosynthesis fumihopaside A, a hopane-type glucoside that enhances the thermotolerance and UV resistance of N.fumigata. This Aspergillus fumigatus (strain CBS 144.89 / FGSC A1163 / CEA10) (Neosartorya fumigata) protein is Zn(2)-C6 fungal-type transcription factor afumD.